The sequence spans 123 residues: MAIAKRKPAEPVRIELKKEDTVKVLTGRDKGKEGRVLAVNRETGKVLVEHVMMIKRHTRPNPGKQIKGGIAERESPINASNVLIVCPGCHKAVRIAHHIDKIAGGKARRTRVCRKCGQTLDRK.

The protein belongs to the universal ribosomal protein uL24 family. Part of the 50S ribosomal subunit.

In terms of biological role, one of two assembly initiator proteins, it binds directly to the 5'-end of the 23S rRNA, where it nucleates assembly of the 50S subunit. Its function is as follows. One of the proteins that surrounds the polypeptide exit tunnel on the outside of the subunit. This chain is Large ribosomal subunit protein uL24, found in Solibacter usitatus (strain Ellin6076).